We begin with the raw amino-acid sequence, 670 residues long: Transketolase, plasmid (670 aa).

Residue His32 participates in substrate binding. Residues His72 and 120-122 (GPL) each bind thiamine diphosphate. Asp161 serves as a coordination point for Mg(2+). Thiamine diphosphate is bound by residues Gly162 and Asn191. Asn191 and Ile193 together coordinate Mg(2+). 3 residues coordinate substrate: His267, Arg364, and Ser391. His267 is a binding site for thiamine diphosphate. Residue Glu417 is the Proton donor of the active site. Residue Phe443 participates in thiamine diphosphate binding. Substrate contacts are provided by His467, Asp475, and Arg526.

The protein belongs to the transketolase family. Homodimer. Mg(2+) serves as cofactor. Ca(2+) is required as a cofactor. Requires Mn(2+) as cofactor. The cofactor is Co(2+). It depends on thiamine diphosphate as a cofactor.

The catalysed reaction is D-sedoheptulose 7-phosphate + D-glyceraldehyde 3-phosphate = aldehydo-D-ribose 5-phosphate + D-xylulose 5-phosphate. Its pathway is carbohydrate biosynthesis; Calvin cycle. Its function is as follows. Catalyzes the transfer of a two-carbon ketol group from a ketose donor to an aldose acceptor, via a covalent intermediate with the cofactor thiamine pyrophosphate. The polypeptide is Transketolase, plasmid (cbbTP) (Cupriavidus necator (strain ATCC 17699 / DSM 428 / KCTC 22496 / NCIMB 10442 / H16 / Stanier 337) (Ralstonia eutropha)).